The following is a 248-amino-acid chain: 3-deoxy-manno-octulosonate cytidylyltransferase (248 aa).

Belongs to the KdsB family.

The protein resides in the cytoplasm. The catalysed reaction is 3-deoxy-alpha-D-manno-oct-2-ulosonate + CTP = CMP-3-deoxy-beta-D-manno-octulosonate + diphosphate. It participates in nucleotide-sugar biosynthesis; CMP-3-deoxy-D-manno-octulosonate biosynthesis; CMP-3-deoxy-D-manno-octulosonate from 3-deoxy-D-manno-octulosonate and CTP: step 1/1. Its pathway is bacterial outer membrane biogenesis; lipopolysaccharide biosynthesis. Functionally, activates KDO (a required 8-carbon sugar) for incorporation into bacterial lipopolysaccharide in Gram-negative bacteria. The sequence is that of 3-deoxy-manno-octulosonate cytidylyltransferase from Leptospira interrogans serogroup Icterohaemorrhagiae serovar copenhageni (strain Fiocruz L1-130).